A 354-amino-acid chain; its full sequence is Holliday junction branch migration complex subunit RuvB (354 aa).

The segment at 1–22 is disordered; the sequence is MTIQTDDFAPAPPRVVSAAPAS. The segment at 5 to 193 is large ATPase domain (RuvB-L); sequence TDDFAPAPPR…FGIVARLEFY (189 aa). ATP is bound by residues L32, R33, G74, K77, T78, T79, 140-142, R183, Y193, and R230; that span reads EDY. T78 lines the Mg(2+) pocket. The segment at 194 to 264 is small ATPAse domain (RuvB-S); that stretch reads TPEELALIVR…IAHKALVMLD (71 aa). Residues 267-354 form a head domain (RuvB-H) region; sequence PQGFDLMDRK…RSDGQDLFGI (88 aa). Residues R303, R322, and R327 each contribute to the DNA site.

The protein belongs to the RuvB family. Homohexamer. Forms an RuvA(8)-RuvB(12)-Holliday junction (HJ) complex. HJ DNA is sandwiched between 2 RuvA tetramers; dsDNA enters through RuvA and exits via RuvB. An RuvB hexamer assembles on each DNA strand where it exits the tetramer. Each RuvB hexamer is contacted by two RuvA subunits (via domain III) on 2 adjacent RuvB subunits; this complex drives branch migration. In the full resolvosome a probable DNA-RuvA(4)-RuvB(12)-RuvC(2) complex forms which resolves the HJ.

The protein resides in the cytoplasm. It catalyses the reaction ATP + H2O = ADP + phosphate + H(+). In terms of biological role, the RuvA-RuvB-RuvC complex processes Holliday junction (HJ) DNA during genetic recombination and DNA repair, while the RuvA-RuvB complex plays an important role in the rescue of blocked DNA replication forks via replication fork reversal (RFR). RuvA specifically binds to HJ cruciform DNA, conferring on it an open structure. The RuvB hexamer acts as an ATP-dependent pump, pulling dsDNA into and through the RuvAB complex. RuvB forms 2 homohexamers on either side of HJ DNA bound by 1 or 2 RuvA tetramers; 4 subunits per hexamer contact DNA at a time. Coordinated motions by a converter formed by DNA-disengaged RuvB subunits stimulates ATP hydrolysis and nucleotide exchange. Immobilization of the converter enables RuvB to convert the ATP-contained energy into a lever motion, pulling 2 nucleotides of DNA out of the RuvA tetramer per ATP hydrolyzed, thus driving DNA branch migration. The RuvB motors rotate together with the DNA substrate, which together with the progressing nucleotide cycle form the mechanistic basis for DNA recombination by continuous HJ branch migration. Branch migration allows RuvC to scan DNA until it finds its consensus sequence, where it cleaves and resolves cruciform DNA. The chain is Holliday junction branch migration complex subunit RuvB from Variovorax paradoxus (strain S110).